The sequence spans 258 residues: Phosphate import ATP-binding protein PstB 2 (258 aa).

Positions 12-253 (IQVRDLNFYY…PQQKQTEDYI (242 aa)) constitute an ABC transporter domain. Residue 44–51 (GPSGCGKS) participates in ATP binding.

The protein belongs to the ABC transporter superfamily. Phosphate importer (TC 3.A.1.7) family. As to quaternary structure, the complex is composed of two ATP-binding proteins (PstB), two transmembrane proteins (PstC and PstA) and a solute-binding protein (PstS).

It is found in the cell inner membrane. It carries out the reaction phosphate(out) + ATP + H2O = ADP + 2 phosphate(in) + H(+). Functionally, part of the ABC transporter complex PstSACB involved in phosphate import. Responsible for energy coupling to the transport system. This chain is Phosphate import ATP-binding protein PstB 2, found in Yersinia pestis bv. Antiqua (strain Nepal516).